The sequence spans 265 residues: Formyltransferase/hydrolase complex Fhc subunit C (265 aa).

The protein belongs to the FwdC/FmdC family. Octaheteromer. Part of the formyltransferase/hydrolase complex fhc; composed of FhcA, FhcB, FhcC and FhcD.

It localises to the cytoplasm. The protein operates within one-carbon metabolism; formaldehyde degradation; formate from formaldehyde (H(4)MPT route): step 4/5. In terms of biological role, involved in the transformation of 5-formyl tetrahydromethanopterin (5-formyl-H(4)MPT) to methanofuran (MFR) and formate via the formylmethanofuran (formyl-MFR). The protein is Formyltransferase/hydrolase complex Fhc subunit C (fhcC) of Methylorubrum extorquens (strain ATCC 14718 / DSM 1338 / JCM 2805 / NCIMB 9133 / AM1) (Methylobacterium extorquens).